A 382-amino-acid chain; its full sequence is Pyrimidine monooxygenase RutA (382 aa).

FMN is bound by residues 68–69 (IK), N134, E143, 159–160 (RY), and S209.

Belongs to the NtaA/SnaA/DszA monooxygenase family. RutA subfamily.

The enzyme catalyses uracil + FMNH2 + NADH + O2 = (Z)-3-ureidoacrylate + FMN + NAD(+) + H2O + H(+). The catalysed reaction is thymine + FMNH2 + NADH + O2 = (Z)-2-methylureidoacrylate + FMN + NAD(+) + H2O + H(+). Its function is as follows. Catalyzes the pyrimidine ring opening between N-3 and C-4 by an unusual flavin hydroperoxide-catalyzed mechanism, adding oxygen atoms in the process to yield ureidoacrylate peracid, that immediately reacts with FMN forming ureidoacrylate and FMN-N(5)-oxide. The FMN-N(5)-oxide reacts spontaneously with NADH to produce FMN. Requires the flavin reductase RutF to regenerate FMN in vivo. This chain is Pyrimidine monooxygenase RutA, found in Escherichia coli O45:K1 (strain S88 / ExPEC).